The sequence spans 340 residues: MIQDEIKVSTQTLQWKCIESKIESKRLLYSRFAISPFRKGQANTVGIAMRRALLNEIEGASITYAKIKKVKHEYSTIIGLQESIHDILINLKEIVLKSESFEPQKAYISVLGPKKITAQDIKGPSCIKIMIIAQYIATLNKDILLEIELNIEKDRGYRIENLQKYQEGLFPVDAVFMPIRNANYSVHSFESEKKIKEILFLEIWTDGSLTPKEALYEASRNLIDLFIPLINSEKKEKNFGIEKTNESNMSYFPFQSVSLDIEKMTKDVAFKHIFIDQLELPARAYNCLKKVNVHTIADLLHYSEDDLIKIKNFGKKSVEQVLEALKKRFSIQLPKNKNYL.

The interval 1 to 233 (MIQDEIKVST…DLFIPLINSE (233 aa)) is alpha N-terminal domain (alpha-NTD). Positions 265–340 (TKDVAFKHIF…IQLPKNKNYL (76 aa)) are alpha C-terminal domain (alpha-CTD).

It belongs to the RNA polymerase alpha chain family. In plastids the minimal PEP RNA polymerase catalytic core is composed of four subunits: alpha, beta, beta', and beta''. When a (nuclear-encoded) sigma factor is associated with the core the holoenzyme is formed, which can initiate transcription.

Its subcellular location is the plastid. The protein resides in the chloroplast. The catalysed reaction is RNA(n) + a ribonucleoside 5'-triphosphate = RNA(n+1) + diphosphate. In terms of biological role, DNA-dependent RNA polymerase catalyzes the transcription of DNA into RNA using the four ribonucleoside triphosphates as substrates. This chain is DNA-directed RNA polymerase subunit alpha, found in Marchantia polymorpha (Common liverwort).